The sequence spans 243 residues: Pyridoxine 5'-phosphate synthase (243 aa).

N7 contacts 3-amino-2-oxopropyl phosphate. A 1-deoxy-D-xylulose 5-phosphate-binding site is contributed by 9–10; that stretch reads DH. Residue R18 coordinates 3-amino-2-oxopropyl phosphate. The active-site Proton acceptor is H43. 1-deoxy-D-xylulose 5-phosphate is bound by residues R45 and H50. The active-site Proton acceptor is E70. T100 contacts 1-deoxy-D-xylulose 5-phosphate. H190 serves as the catalytic Proton donor. 3-amino-2-oxopropyl phosphate is bound by residues G191 and 212–213; that span reads GH.

Belongs to the PNP synthase family. As to quaternary structure, homooctamer; tetramer of dimers.

It localises to the cytoplasm. It carries out the reaction 3-amino-2-oxopropyl phosphate + 1-deoxy-D-xylulose 5-phosphate = pyridoxine 5'-phosphate + phosphate + 2 H2O + H(+). It participates in cofactor biosynthesis; pyridoxine 5'-phosphate biosynthesis; pyridoxine 5'-phosphate from D-erythrose 4-phosphate: step 5/5. Its function is as follows. Catalyzes the complicated ring closure reaction between the two acyclic compounds 1-deoxy-D-xylulose-5-phosphate (DXP) and 3-amino-2-oxopropyl phosphate (1-amino-acetone-3-phosphate or AAP) to form pyridoxine 5'-phosphate (PNP) and inorganic phosphate. The sequence is that of Pyridoxine 5'-phosphate synthase from Prochlorococcus marinus (strain MIT 9211).